The primary structure comprises 158 residues: Curculin-2 (158 aa).

The first 22 residues, methionine 1–alanine 22, serve as a signal peptide directing secretion. The Bulb-type lectin domain occupies aspartate 23–cysteine 131. Cysteine 51 and cysteine 74 form a disulfide bridge. N-linked (GlcNAc...) asparagine glycosylation is present at asparagine 103. Residues glycine 136–asparagine 158 constitute a propeptide that is removed on maturation.

In terms of assembly, heterodimer with curculin-1; Disulfide-linked.

In terms of biological role, taste-modifying protein; sweet-tasting. After curculin, water elicits a sweet taste, and sour substances induce a stronger sense of sweetness. The polypeptide is Curculin-2 (Molineria latifolia (Lumbah)).